A 118-amino-acid chain; its full sequence is Small ribosomal subunit protein uS13 (118 aa).

Residues 94–118 (GLPLRGQRTRTNARTRKGPRRPIRK) form a disordered region.

This sequence belongs to the universal ribosomal protein uS13 family. In terms of assembly, part of the 30S ribosomal subunit. Forms a loose heterodimer with protein S19. Forms two bridges to the 50S subunit in the 70S ribosome.

In terms of biological role, located at the top of the head of the 30S subunit, it contacts several helices of the 16S rRNA. In the 70S ribosome it contacts the 23S rRNA (bridge B1a) and protein L5 of the 50S subunit (bridge B1b), connecting the 2 subunits; these bridges are implicated in subunit movement. Contacts the tRNAs in the A and P-sites. The protein is Small ribosomal subunit protein uS13 of Thioalkalivibrio sulfidiphilus (strain HL-EbGR7).